The following is a 734-amino-acid chain: ATP-dependent RNA helicase DDX50 (734 aa).

The disordered stretch occupies residues 1–131 (MPGKLLWGDI…KAEETLTREQ (131 aa)). Residues 11-20 (MELEAPLEES) are compositionally biased toward acidic residues. 2 stretches are compositionally biased toward basic and acidic residues: residues 38–51 (HSES…RENG) and 67–86 (REKL…EFSP). Serine 41, serine 81, serine 85, serine 113, serine 119, and serine 120 each carry phosphoserine. Over residues 115–131 (NSHKSSDKAEETLTREQ) the composition is skewed to basic and acidic residues. Lysine 122 is covalently cross-linked (Glycyl lysine isopeptide (Lys-Gly) (interchain with G-Cter in SUMO2)). The short motif at 134 to 162 (GAFSNFSISEETIKLLKGRGVTYLFPIQV) is the Q motif element. Residues 165-344 (FGPVYEGKDL…KKYMKSRYEQ (180 aa)) enclose the Helicase ATP-binding domain. 178-185 (ARTGTGKT) is a binding site for ATP. At threonine 244 the chain carries Phosphothreonine. Positions 287 to 290 (DEVD) match the DEVD box motif. The region spanning 377-521 (DVLQVYSGSE…GVPSTMDLVK (145 aa)) is the Helicase C-terminal domain. A Phosphoserine modification is found at serine 515. Residues 664 to 734 (YYDGNTSSNP…RSGGHKRNFD (71 aa)) are disordered. Gly residues predominate over residues 679–698 (WSGGRSGRSGRSGGRSGGRS). A compositionally biased stretch (low complexity) spans 699 to 709 (GRQSRQGSRSG). A compositionally biased stretch (basic residues) spans 717-734 (RSGNRNRSRSGGHKRNFD).

This sequence belongs to the DEAD box helicase family. DDX21/DDX50 subfamily. Interacts with C1QBP. Interacts with the ubiquitin ligase CTLH complex through GID4. Interacts with TICAM1.

The protein resides in the nucleus. Its subcellular location is the nucleolus. It is found in the cytoplasm. It catalyses the reaction ATP + H2O = ADP + phosphate + H(+). Its function is as follows. ATP-dependent RNA helicase that may play a role in various aspects of RNA metabolism including pre-mRNA splicing or ribosomal RNA production. Also acts as a viral restriction factor and promotes the activation of the NF-kappa-B and IRF3 signaling pathways following its stimulation with viral RNA or infection with RNA and DNA viruses. For instance, decreases vaccinia virus, herpes simplex virus, Zika virus or dengue virus replication during the early stage of infection. Mechanistically, acts via the adapter TICAM1 and independently of the DDX1-DDX21-DHX36 helicase complex to induce the production of interferon-beta. This is ATP-dependent RNA helicase DDX50 (Ddx50) from Mus musculus (Mouse).